Here is a 470-residue protein sequence, read N- to C-terminus: Probable tocopherol cyclase, chloroplastic (470 aa).

The N-terminal 61 residues, 1–61 (MDLAAAAVAV…APTPRDRALR (61 aa)), are a transit peptide targeting the chloroplast. Positions 14-48 (RPAPPPRRCAPRRHRRALAPRAASSSPSPSTAVAA) are disordered. A compositionally biased stretch (basic residues) spans 22–31 (CAPRRHRRAL). Positions 32-48 (APRAASSSPSPSTAVAA) are enriched in low complexity.

As to expression, expressed in the roots, stems, leaves and spikelets.

The protein localises to the plastid. It localises to the chloroplast. It is found in the plastoglobule. It participates in cofactor biosynthesis; tocopherol biosynthesis. Functionally, involved in the synthesis of both tocopherols and tocotrienols (vitamin E), which presumably protect photosynthetic complexes from oxidative stress. Catalyzes the conversion of 2-methyl-6-phytyl-1,4-hydroquinone and 2,3-dimethyl-5-phytyl-1,4-hydroquinone (DMPQ) to delta- and gamma-tocopherol respectively. Also converts 2,3-dimethyl-5-geranylgeranyl-1,4-hydroquinone (DMGQ) to gamma-tocotrienol. This is Probable tocopherol cyclase, chloroplastic (VTE1) from Oryza sativa subsp. japonica (Rice).